A 309-amino-acid chain; its full sequence is NADH-cytochrome b5 reductase 1 (309 aa).

A helical membrane pass occupies residues 31 to 51 (DWVVYSVALALALGTWKFFQL). One can recognise an FAD-binding FR-type domain in the interval 60-168 (TKFQEFELKE…RGPKGAFVYQ (109 aa)). Residues 148–163 (AGLS…GPKG) and 174–208 (HFGM…QVDL) each bind FAD.

It belongs to the flavoprotein pyridine nucleotide cytochrome reductase family. As to quaternary structure, monomer. Component of the 2-(3-amino-3-carboxypropyl)histidine synthase complex composed of DPH1, DPH2, DPH3 and a NADH-dependent reductase, predominantly CBR1. FAD is required as a cofactor.

Its subcellular location is the mitochondrion outer membrane. It carries out the reaction 2 Fe(III)-[cytochrome b5] + NADH = 2 Fe(II)-[cytochrome b5] + NAD(+) + H(+). The enzyme catalyses 2 Fe(3+)-[Dph3] + NADH = 2 Fe(2+)-[Dph3] + NAD(+) + H(+). It participates in protein modification; peptidyl-diphthamide biosynthesis. Functionally, NADH-dependent reductase for DPH3 and cytochrome b5. Required for the first step of diphthamide biosynthesis, a post-translational modification of histidine which occurs in elongation factor 2. DPH1 and DPH2 transfer a 3-amino-3-carboxypropyl (ACP) group from S-adenosyl-L-methionine (SAM) to a histidine residue, the reaction is assisted by a reduction system comprising DPH3 and a NADH-dependent reductase, predominantly CBR1. By reducing DPH3, also involved in the formation of the tRNA wobble base modification mcm5s 2U (5-methoxycarbonylmethyl-2-thiouridine), mediated by the elongator complex. The cytochrome b5/NADH cytochrome b5 reductase electron transfer system supports the catalytic activity of several sterol biosynthetic enzymes. The sequence is that of NADH-cytochrome b5 reductase 1 (CBR1) from Pyricularia oryzae (strain 70-15 / ATCC MYA-4617 / FGSC 8958) (Rice blast fungus).